We begin with the raw amino-acid sequence, 504 residues long: Cytoplasmic dynein 1 light intermediate chain 1 (504 aa).

Residue Gly35–Ser42 coordinates ATP. Low complexity-rich tracts occupy residues Thr167 to Thr189, Asn392 to Leu425, and Ser437 to Pro446. Disordered stretches follow at residues Thr167–Lys195, Leu383–Pro446, and Asp464–Lys504. Over residues Asp464–Lys473 the composition is skewed to basic and acidic residues. Polar residues predominate over residues Ser475–Asn487. Basic and acidic residues predominate over residues Ala488–Lys504.

The protein belongs to the dynein light intermediate chain family. As to quaternary structure, homodimer. The cytoplasmic dynein 1 complex consists of two catalytic heavy chains (HCs) and a number of non-catalytic subunits presented by intermediate chains (ICs), light intermediate chains (LICs) and light chains (LCs).

The protein resides in the cytoplasm. It is found in the cytoskeleton. Its function is as follows. Acts as one of several non-catalytic accessory components of the cytoplasmic dynein 1 complex that are thought to be involved in linking dynein to cargos and to adapter proteins that regulate dynein function. Cytoplasmic dynein 1 acts as a motor for the intracellular retrograde motility of vesicles and organelles along microtubules. May play a role in binding dynein to membranous organelles or chromosomes. The chain is Cytoplasmic dynein 1 light intermediate chain 1 (dync1li1) from Dictyostelium discoideum (Social amoeba).